The sequence spans 707 residues: Ribosomal RNA large subunit methyltransferase K/L (707 aa).

One can recognise a THUMP domain in the interval 44 to 155 (VIYNLCLWSR…NDILTVSFDL (112 aa)).

Belongs to the methyltransferase superfamily. RlmKL family.

It localises to the cytoplasm. It carries out the reaction guanosine(2445) in 23S rRNA + S-adenosyl-L-methionine = N(2)-methylguanosine(2445) in 23S rRNA + S-adenosyl-L-homocysteine + H(+). It catalyses the reaction guanosine(2069) in 23S rRNA + S-adenosyl-L-methionine = N(2)-methylguanosine(2069) in 23S rRNA + S-adenosyl-L-homocysteine + H(+). Its function is as follows. Specifically methylates the guanine in position 2445 (m2G2445) and the guanine in position 2069 (m7G2069) of 23S rRNA. This Legionella pneumophila subsp. pneumophila (strain Philadelphia 1 / ATCC 33152 / DSM 7513) protein is Ribosomal RNA large subunit methyltransferase K/L.